A 378-amino-acid polypeptide reads, in one-letter code: Putative glutamate--cysteine ligase 2 (378 aa).

The protein belongs to the glutamate--cysteine ligase type 2 family. YbdK subfamily.

It catalyses the reaction L-cysteine + L-glutamate + ATP = gamma-L-glutamyl-L-cysteine + ADP + phosphate + H(+). Functionally, ATP-dependent carboxylate-amine ligase which exhibits weak glutamate--cysteine ligase activity. The protein is Putative glutamate--cysteine ligase 2 of Salinispora arenicola (strain CNS-205).